Here is a 505-residue protein sequence, read N- to C-terminus: MVTLTGHSLTVEEMKRLLFEREGVTACPDSMQKVAECREAVEKIVEDGKVVYGITTGFGKFSDVLIQKEDVKELQHNLIQSHACGVGDPFPEEVSRGMLILRANTMLKGVSGVRPLVVNMLLELVNRNIHPVIPQQGSLGASGDLAPLSHLALVLLGEGEVFYKGKRVHAMIALTEEGLEPIELEAKEGLALINGTQAMTAQGILSYIEAETLAYQSELIASMTLEGLRGIIDAFDENVHKARGYKEQIEVAQRIRNILQDSKLVTKQGELRVQDAYSLRCIPQVHGASWQVLHYVKEKLEIEMNAATDNPLIFDGGEKVISGGNFHGQPIAFAMDFLKVGMAEIANISERRIERLVNPQLNDLPPFLSPKPGLQSGAMIMQYAAASLVSENKTLAHPASVDSIPSSANQEDHVSMGTIASRHAHQIIQNVRRVLAIEMICAMQAAEYRGIEEMSSATKIFYHQGRQQVPSITNDRIFSTDIENIAHWLKTSPFTLERLNVNATL.

Residues 141 to 143 constitute a cross-link (5-imidazolinone (Ala-Gly)); that stretch reads ASG. A 2,3-didehydroalanine (Ser) modification is found at Ser-142.

Belongs to the PAL/histidase family. Contains an active site 4-methylidene-imidazol-5-one (MIO), which is formed autocatalytically by cyclization and dehydration of residues Ala-Ser-Gly.

Its subcellular location is the cytoplasm. The catalysed reaction is L-histidine = trans-urocanate + NH4(+). It participates in amino-acid degradation; L-histidine degradation into L-glutamate; N-formimidoyl-L-glutamate from L-histidine: step 1/3. The polypeptide is Histidine ammonia-lyase (Bacillus cytotoxicus (strain DSM 22905 / CIP 110041 / 391-98 / NVH 391-98)).